The following is a 376-amino-acid chain: E3 ubiquitin-protein ligase RNF34 (376 aa).

Residues 56–107 (EGPNIVCKACGLSFSVFRKKHVCCDCKKDFCSLCSVSQENLRRCSTCHLLQE) form an FYVE-type zinc finger. Positions 115-134 (LMRLKVKDLRQYLLLRNIPT) constitute an SAP 1 domain. The residue at position 169 (Ser-169) is a Phosphoserine. Residues 216–256 (IASANTDDDDDDDDDDDDDEDDDDEQEEEEQNPGLSKKKAR) form a disordered region. The span at 221 to 246 (TDDDDDDDDDDDDDEDDDDEQEEEEQ) shows a compositional bias: acidic residues. 2 positions are modified to phosphoserine: Ser-258 and Ser-260. Residues 268–282 (VEGMSVRQLKEILAR) form the SAP 2 domain. Residues 329 to 364 (CRICMDAVIDCVLLECGHMVTCTKCGKRMSECPICR) form an RING-type zinc finger.

As to quaternary structure, interacts with CASP8 and CASP10. Interacts with p53/TP53; involved in p53/TP53 ubiquitination. Interacts (via RING-type zinc finger) with MDM2; the interaction stabilizes MDM2. Interacts (via RING-type zinc finger) with PPARGC1A. Interacts with NOD1. Post-translationally, autoubiquitinated (in vitro). In terms of processing, proteolytically cleaved by caspases upon induction of apoptosis by TNF.

It is found in the cell membrane. The protein resides in the endomembrane system. It localises to the nucleus. Its subcellular location is the nucleus speckle. The protein localises to the cytoplasm. It is found in the cytosol. It catalyses the reaction S-ubiquitinyl-[E2 ubiquitin-conjugating enzyme]-L-cysteine + [acceptor protein]-L-lysine = [E2 ubiquitin-conjugating enzyme]-L-cysteine + N(6)-ubiquitinyl-[acceptor protein]-L-lysine.. The protein operates within protein modification; protein ubiquitination. In terms of biological role, E3 ubiquitin-protein ligase that regulates several biological processes through the ubiquitin-mediated proteasomal degradation of various target proteins. Ubiquitinates the caspases CASP8 and CASP10, promoting their proteasomal degradation, to negatively regulate cell death downstream of death domain receptors in the extrinsic pathway of apoptosis. May mediate 'Lys-48'-linked polyubiquitination of RIPK1 and its subsequent proteasomal degradation thereby indirectly regulating the tumor necrosis factor-mediated signaling pathway. Negatively regulates p53/TP53 through its direct ubiquitination and targeting to proteasomal degradation. Indirectly, may also negatively regulate p53/TP53 through ubiquitination and degradation of SFN. Mediates PPARGC1A proteasomal degradation probably through ubiquitination thereby indirectly regulating the metabolism of brown fat cells. Possibly involved in innate immunity, through 'Lys-48'-linked polyubiquitination of NOD1 and its subsequent proteasomal degradation. In Mus musculus (Mouse), this protein is E3 ubiquitin-protein ligase RNF34.